The sequence spans 626 residues: DNA mismatch repair protein MutL (626 aa).

The protein belongs to the DNA mismatch repair MutL/HexB family.

Its function is as follows. This protein is involved in the repair of mismatches in DNA. It is required for dam-dependent methyl-directed DNA mismatch repair. May act as a 'molecular matchmaker', a protein that promotes the formation of a stable complex between two or more DNA-binding proteins in an ATP-dependent manner without itself being part of a final effector complex. The protein is DNA mismatch repair protein MutL of Pelodictyon phaeoclathratiforme (strain DSM 5477 / BU-1).